Here is a 586-residue protein sequence, read N- to C-terminus: Actin-related protein 9 (586 aa).

Residues 141 to 169 are disordered; it reads STPIVDKDADVDPLQRSTPDDTEPNSEEN.

It belongs to the actin family. ARP8 subfamily.

This is Actin-related protein 9 (ARP9) from Oryza sativa subsp. indica (Rice).